Reading from the N-terminus, the 239-residue chain is Ribonuclease PH (239 aa).

Phosphate contacts are provided by residues R86 and 124–126 (GTR).

It belongs to the RNase PH family. Homohexameric ring arranged as a trimer of dimers.

The catalysed reaction is tRNA(n+1) + phosphate = tRNA(n) + a ribonucleoside 5'-diphosphate. Its function is as follows. Phosphorolytic 3'-5' exoribonuclease that plays an important role in tRNA 3'-end maturation. Removes nucleotide residues following the 3'-CCA terminus of tRNAs; can also add nucleotides to the ends of RNA molecules by using nucleoside diphosphates as substrates, but this may not be physiologically important. Probably plays a role in initiation of 16S rRNA degradation (leading to ribosome degradation) during starvation. The protein is Ribonuclease PH of Rickettsia felis (strain ATCC VR-1525 / URRWXCal2) (Rickettsia azadi).